The primary structure comprises 427 residues: Serine--tRNA ligase (427 aa).

231-233 (TAE) contributes to the L-serine binding site. 262–264 (RSE) is an ATP binding site. Glu-285 contributes to the L-serine binding site. Residue 349–352 (EISS) participates in ATP binding. Ser-385 contributes to the L-serine binding site.

The protein belongs to the class-II aminoacyl-tRNA synthetase family. Type-1 seryl-tRNA synthetase subfamily. Homodimer. The tRNA molecule binds across the dimer.

Its subcellular location is the cytoplasm. It carries out the reaction tRNA(Ser) + L-serine + ATP = L-seryl-tRNA(Ser) + AMP + diphosphate + H(+). It catalyses the reaction tRNA(Sec) + L-serine + ATP = L-seryl-tRNA(Sec) + AMP + diphosphate + H(+). It functions in the pathway aminoacyl-tRNA biosynthesis; selenocysteinyl-tRNA(Sec) biosynthesis; L-seryl-tRNA(Sec) from L-serine and tRNA(Sec): step 1/1. In terms of biological role, catalyzes the attachment of serine to tRNA(Ser). Is also able to aminoacylate tRNA(Sec) with serine, to form the misacylated tRNA L-seryl-tRNA(Sec), which will be further converted into selenocysteinyl-tRNA(Sec). In Listeria monocytogenes serotype 4b (strain CLIP80459), this protein is Serine--tRNA ligase.